We begin with the raw amino-acid sequence, 615 residues long: Zinc finger protein 653 (615 aa).

Disordered stretches follow at residues M1–R46, R93–R115, and P174–I235. Positions E7–G25 are enriched in low complexity. The segment covering K106–R115 has biased composition (basic residues). Low complexity-rich tracts occupy residues G192 to S203 and Q212 to S232. 5 consecutive C2H2-type zinc fingers follow at residues F467–H492, K498–H522, F528–H550, L556–H578, and F586–H609.

Belongs to the krueppel C2H2-type zinc-finger protein family. As to quaternary structure, interacts with NR5A1. As to expression, highly expressed in testis and spleen. Moderately expressed in lung, adrenal gland, uterus, and ovary. Very low expression in pancreas, heart, skeletal muscle, adipose tissue, kidney, and liver.

It localises to the nucleus. Transcriptional repressor. May repress NR5A1, PPARG, NR1H3, NR4A2, ESR1 and NR3C1 transcriptional activity. The chain is Zinc finger protein 653 (Znf653) from Mus musculus (Mouse).